The following is a 79-amino-acid chain: Putative membrane protein insertion efficiency factor (79 aa).

Belongs to the UPF0161 family.

It localises to the cell inner membrane. In terms of biological role, could be involved in insertion of integral membrane proteins into the membrane. In Prochlorococcus marinus (strain NATL2A), this protein is Putative membrane protein insertion efficiency factor.